A 492-amino-acid chain; its full sequence is Probable glycogen synthase 2 (492 aa).

Lysine 15 contacts ADP-alpha-D-glucose.

Belongs to the glycosyltransferase 1 family. Bacterial/plant glycogen synthase subfamily.

It catalyses the reaction [(1-&gt;4)-alpha-D-glucosyl](n) + ADP-alpha-D-glucose = [(1-&gt;4)-alpha-D-glucosyl](n+1) + ADP + H(+). Its pathway is glycan biosynthesis; glycogen biosynthesis. Its function is as follows. Synthesizes alpha-1,4-glucan chains using ADP-glucose. In Nostoc sp. (strain PCC 7120 / SAG 25.82 / UTEX 2576), this protein is Probable glycogen synthase 2 (glgA2).